A 579-amino-acid chain; its full sequence is MSDSSIVNLSKEGDSNFSSATINLSKVDDTVNVSNATINLSKVTIDPSNQMSNPSNQGINLSKCTKVELRFKCMNLKDMDTFSKSDPQIFVYEKKGNNNNNNNSKPILIGSTEMISNNLNPVFKKTVTIDYHFERIQNLKFEVLDIDGGGKNDTIGDFSITLGNIISKPGKKVIGEIKCNGKQTGTIEIIAEEIQETGQNIILKLQGSKLDKKDLFSSDPFFKIFKSSANGNLLVYQSPVIKSNINPIYNPIIFKLEEFNGGDMFRELTFEFWDYDTIGDNDFIGSFKTTTDEILKGQVREFTLINPKKLSKSSYKNSGKIVFTDARLIAQPTFIDYLSGGCEINLMIAIDCTASNGMPSDRTSLHYNTPTHESEYARSILAVGNVLAPYDSDGKIELLGFGAERFGGVTSHCFQFGPKAEARGIEEVLSTYNKVIPTIKLSYPTNFQEIIKHAHKKSIKGVDSKNQKYTILLILTDGEITDMEETIEEIVKASSKAPLSIVIVGVGIASFELMKKLDGDENQLSDKNGVIATRDIVQFVPFKKYENDPEQLAAETLCEIPEQLIGYMKSQNYFPNMKN.

C2 domains are found at residues 45 to 175 (IDPS…KVIG) and 183 to 304 (QTGT…EFTL). Aspartate 80, aspartate 86, aspartate 145, aspartate 147, and aspartate 153 together coordinate Ca(2+). One can recognise a VWFA domain in the interval 345–552 (NLMIAIDCTA…KKYENDPEQL (208 aa)).

It belongs to the copine family. Ca(2+) is required as a cofactor.

This Dictyostelium discoideum (Social amoeba) protein is Copine-E (cpnE).